Reading from the N-terminus, the 156-residue chain is MPRRREVAKRVILPDPKYADRVVAKLINIIMLDGKKSTAEKALYGAMEIAAGKAGEEPVKVLKKCLDNIKPMLEVKSRRVGGSTYQVPVEVRPERRVSLAMRWLVKYSNARSEKTVTDKLAGEILDAYNNRGSAVKKREDTHKMAEANRAFAHYRW.

It belongs to the universal ribosomal protein uS7 family. Part of the 30S ribosomal subunit. Contacts proteins S9 and S11.

One of the primary rRNA binding proteins, it binds directly to 16S rRNA where it nucleates assembly of the head domain of the 30S subunit. Is located at the subunit interface close to the decoding center, probably blocks exit of the E-site tRNA. The chain is Small ribosomal subunit protein uS7 from Geobacter sp. (strain M21).